The sequence spans 323 residues: HPr kinase/phosphorylase (323 aa).

Active-site residues include histidine 146 and lysine 167. Residue 161 to 168 (GESGLGKS) coordinates ATP. Serine 168 is a Mg(2+) binding site. Aspartate 185 (proton acceptor; for phosphorylation activity. Proton donor; for dephosphorylation activity) is an active-site residue. The important for the catalytic mechanism of both phosphorylation and dephosphorylation stretch occupies residues 209–218 (LEVRGLGLLD). Glutamate 210 serves as a coordination point for Mg(2+). The active site involves arginine 250. An important for the catalytic mechanism of dephosphorylation region spans residues 271–276 (QVAAGR).

This sequence belongs to the HPrK/P family. In terms of assembly, homohexamer. The cofactor is Mg(2+).

The enzyme catalyses [HPr protein]-L-serine + ATP = [HPr protein]-O-phospho-L-serine + ADP + H(+). The catalysed reaction is [HPr protein]-O-phospho-L-serine + phosphate + H(+) = [HPr protein]-L-serine + diphosphate. Its function is as follows. Catalyzes the ATP- as well as the pyrophosphate-dependent phosphorylation of a specific serine residue in HPr, a phosphocarrier protein of the phosphoenolpyruvate-dependent sugar phosphotransferase system (PTS). HprK/P also catalyzes the pyrophosphate-producing, inorganic phosphate-dependent dephosphorylation (phosphorolysis) of seryl-phosphorylated HPr (P-Ser-HPr). This chain is HPr kinase/phosphorylase, found in Cupriavidus pinatubonensis (strain JMP 134 / LMG 1197) (Cupriavidus necator (strain JMP 134)).